We begin with the raw amino-acid sequence, 843 residues long: DNA gyrase subunit A (843 aa).

The 468-residue stretch at 61 to 528 (LPDVRDGLKP…ESSTFNAEDL (468 aa)) folds into the Topo IIA-type catalytic domain. Y149 serves as the catalytic O-(5'-phospho-DNA)-tyrosine intermediate. The GyrA-box signature appears at 555-561 (QKRGGKG).

Belongs to the type II topoisomerase GyrA/ParC subunit family. In terms of assembly, heterotetramer, composed of two GyrA and two GyrB chains. In the heterotetramer, GyrA contains the active site tyrosine that forms a transient covalent intermediate with DNA, while GyrB binds cofactors and catalyzes ATP hydrolysis.

It is found in the cytoplasm. It catalyses the reaction ATP-dependent breakage, passage and rejoining of double-stranded DNA.. Functionally, a type II topoisomerase that negatively supercoils closed circular double-stranded (ds) DNA in an ATP-dependent manner to modulate DNA topology and maintain chromosomes in an underwound state. Negative supercoiling favors strand separation, and DNA replication, transcription, recombination and repair, all of which involve strand separation. Also able to catalyze the interconversion of other topological isomers of dsDNA rings, including catenanes and knotted rings. Type II topoisomerases break and join 2 DNA strands simultaneously in an ATP-dependent manner. The protein is DNA gyrase subunit A of Leptospira biflexa serovar Patoc (strain Patoc 1 / Ames).